The primary structure comprises 379 residues: Deoxyguanosinetriphosphate triphosphohydrolase-like protein (379 aa).

The region spanning 69–200 (RLTHTIEVAQ…ANLADEIAYS (132 aa)) is the HD domain.

It belongs to the dGTPase family. Type 2 subfamily.

This Azoarcus sp. (strain BH72) protein is Deoxyguanosinetriphosphate triphosphohydrolase-like protein.